A 463-amino-acid polypeptide reads, in one-letter code: MAALRALCGFRGVAAQVLRPGAGVRLPIQPSRGVRQWQPDVEWAQQFGGAVMYPSKETAHWKPPPWNDVDPPKDTIVKNMTLNFGPQHPAAHGVLRLVMELSGEMVRKCDPHIGLLHRGTEKLIEYKTYLQALPYFDRLDYVSMMCNEQAYSLAVEKLLNIRPPPRAQWIRVLFGEITRLLNHIMAVTTHALDLGAMTPFFWLFEEREKMFEFYERVSGARMHAAYIRPGGVHQDLPLGLMDDIYQFSKNFSLRLDELEELLTNNRIWRNRTIDIGVVTAEEALNYGFSGVMLRGSGIQWDLRKTQPYDVYDQVEFDVPVGSRGDCYDRYLCRVEEMRQSLRIIAQCLNKMPPGEIKVDDAKVSPPKRAEMKTSMESLIHHFKLYTEGYQVPPGATYTAIEAPKGEFGVYLVSDGSSRPYRCKIKAPGFAHLAGLDKMSKGHMLADVVAIIGTQDIVFGEVDR.

The transit peptide at 1–33 (MAALRALCGFRGVAAQVLRPGAGVRLPIQPSRG) directs the protein to the mitochondrion. An N6-acetyllysine modification is found at K62. R118 carries the symmetric dimethylarginine modification. [4Fe-4S] cluster-binding residues include C326, C332, and C347.

It belongs to the complex I 49 kDa subunit family. Core subunit of respiratory chain NADH dehydrogenase (Complex I) which is composed of 45 different subunits. Component of the iron-sulfur (IP) fragment of the enzyme. Interacts with NDUFAF3. Interacts with NDUFAF7. Interacts with CERS2. Requires [4Fe-4S] cluster as cofactor. Dimethylation at Arg-118 by NDUFAF7 takes place after NDUFS2 assembles into the complex I, leading to stabilize the early intermediate complex.

It localises to the mitochondrion inner membrane. It carries out the reaction a ubiquinone + NADH + 5 H(+)(in) = a ubiquinol + NAD(+) + 4 H(+)(out). Its function is as follows. Core subunit of the mitochondrial membrane respiratory chain NADH dehydrogenase (Complex I) which catalyzes electron transfer from NADH through the respiratory chain, using ubiquinone as an electron acceptor. Essential for the catalytic activity and assembly of complex I. Redox-sensitive, critical component of the oxygen-sensing pathway in the pulmonary vasculature which plays a key role in acute pulmonary oxygen-sensing and hypoxic pulmonary vasoconstriction. Plays an important role in carotid body sensing of hypoxia. Essential for glia-like neural stem and progenitor cell proliferation, differentiation and subsequent oligodendrocyte or neuronal maturation. This is NADH dehydrogenase [ubiquinone] iron-sulfur protein 2, mitochondrial (NDUFS2) from Pan troglodytes (Chimpanzee).